A 1960-amino-acid chain; its full sequence is Nuclear pore complex protein Nup98-Nup96 (1960 aa).

46 tandem repeats follow at residues 2–3 (FG), 9–10 (FG), 18–19 (FG), 30–31 (FG), 35–36 (FG), 43–44 (FG), 59–60 (FG), 73–74 (FG), 81–82 (FG), 92–93 (FG), 105–106 (FG), 117–118 (FG), 125–126 (FG), 135–136 (FG), 148–149 (FG), 160–161 (FG), 163–164 (FG), 174–175 (FG), 264–265 (FG), 266–267 (FG), 282–283 (FG), 293–294 (FG), 304–305 (FG), 309–310 (FG), 319–320 (FG), 333–334 (FG), 352–353 (FG), 358–359 (FG), 365–366 (FG), 377–378 (FG), 384–385 (FG), 387–388 (FG), 400–401 (FG), 413–414 (FG), 426–427 (FG), 428–429 (FG), 441–442 (FG), 454–455 (FG), 467–468 (FG), 493–494 (FG), 496–497 (FG), 516–517 (FG), 527–528 (FG), 546–547 (FG), 553–554 (FG), and 565–566 (FG). Residues 2–566 (FGGAKPSFGA…GGSLGGGGFG (565 aa)) form a 46 X 2 AA repeats of F-G region. 2 disordered regions span residues 698–768 (KSVE…WLHP) and 781–860 (TGMD…AANQ). Over residues 704 to 718 (NPSSSIGSAPNTPQS) the composition is skewed to polar residues. The span at 755–768 (ESQDNGRRESWLHP) shows a compositional bias: basic and acidic residues. Composition is skewed to polar residues over residues 781-794 (TGMD…STLN) and 806-850 (RPSS…SNRS). In terms of domain architecture, Peptidase S59 spans 886–1028 (RVGYYTIPSL…GSWVFRVKHF (143 aa)). The active-site Nucleophile is the Ser1029.

It belongs to the nucleoporin GLFG family. Part of the nuclear pore complex (NPC). Interacts with Rae1. Nuclear pore complex protein Nup98: Interacts with pzg and Chro. Interacts with MBD-R2; the interaction allows Nup98 recruitment to chromatin. Interacts with Trx. Interacts with Wds. Interacts with Mgtor and Cp190. Upon ecdysone stimulation, interacts with EcR, CTCF, su(Hw) and Trl. Isoform A and isoform C are autoproteolytically cleaved to yield Nup98 and Nup96 or Nup98 only, respectively. In terms of tissue distribution, expressed in brain.

It localises to the chromosome. It is found in the nucleus. Its subcellular location is the nucleoplasm. The protein resides in the nucleus membrane. The protein localises to the nuclear pore complex. Its function is as follows. Part of the nuclear pore complex (NPC). Required for MAD import as part of the Nup107-160 complex and required for nuclear export of Moe probably via its association with Rae1. Plays a role in nuclear mRNA export. Promotes cell antiviral response by up-regulating FoxK-dependent antiviral gene transcription. In germline stem cells, involved in their maintenance and division together with the TGF-Beta and EGFR signaling pathways. In larval lymph glands, has a role in the maintenance of hematopoiesis by regulating Pvr expression. Functionally, part of the nuclear pore complex (NPC). In the nucleoplasm, binds to transcriptionally active chromatin with a preference for regulatory regions; co-localizes with RNA polymerase II in a RNA-independent manner and before transition into transcription elongation. Plays a role in the transcriptional memory process by stabilizing enhancer-promoter loops and by mediating anchoring of chromatin to the nuclear pore complex region. During larval development, interacts with trx and MBD-R2 and regulates transcription of developmental genes including ecdysone-responsive genes such as Eip74 and E23. Part of the nuclear pore complex (NPC). The polypeptide is Nuclear pore complex protein Nup98-Nup96 (Drosophila melanogaster (Fruit fly)).